We begin with the raw amino-acid sequence, 484 residues long: Fork head protein homolog 1 (484 aa).

The FHA domain maps to 76–142; it reads VTIGRNTDSL…NGAKVNFRRI (67 aa). The segment at residues 302–393 is a DNA-binding region (fork-head); sequence IKPPQSYASM…RRDFLNKWNA (92 aa).

In terms of assembly, interacts (via FHA domain) with ECM30, GLN3, URE2, MPH1 AND FDO1. Interacts with the origin recognition complex (ORC) composed of ORC1 to ORC6.

The protein localises to the nucleus. It localises to the cytoplasm. The protein resides in the cytosol. Transcription factor that regulates the expression of the CLB2 cluster of genes during the G2/M phase of the mitotic cell cycle. The CLB2 cluster of genes includes mitotic regulators such as CLB1, CLB2, CDC5 and CDC20 as well as SWI5 and ACE2, transcription factors required for the subsequent temporal wave of cell cycle regulated gene expression in the M/G1 phase interval. Involved in HMRa silencing. FKH1 and FKH2 associate with the coding regions of active genes and influence, in opposing ways, transcriptional elongation and termination, and coordinate early transcription elongation and pre-mRNA processing. Both FKH1 and FKH2 play a role as regulators of lifespan in collaboration with the anaphase-promoting complex (APC), likely through combined regulation of stress response, genomic stability, and cell cycle regulation. FKH1 and FKH2 function also in controlling yeast cell morphology by preventing preudohyphal growth. Acts as a rate-limiting replication origin activator via its interaction with the origin recognition complex (ORC). Plays a transcription-independent role in recombination donor preference during mating-type switching through binding to the recombination enhancer (RE), a 700-bp cis-acting element that controls recombination along the left arm of chromosome III. The chain is Fork head protein homolog 1 from Saccharomyces cerevisiae (strain ATCC 204508 / S288c) (Baker's yeast).